The chain runs to 146 residues: D-aminoacyl-tRNA deacylase (146 aa).

The Gly-cisPro motif, important for rejection of L-amino acids motif lies at 137–138 (GP).

Belongs to the DTD family. In terms of assembly, homodimer.

The protein resides in the cytoplasm. It carries out the reaction glycyl-tRNA(Ala) + H2O = tRNA(Ala) + glycine + H(+). It catalyses the reaction a D-aminoacyl-tRNA + H2O = a tRNA + a D-alpha-amino acid + H(+). In terms of biological role, an aminoacyl-tRNA editing enzyme that deacylates mischarged D-aminoacyl-tRNAs. Also deacylates mischarged glycyl-tRNA(Ala), protecting cells against glycine mischarging by AlaRS. Acts via tRNA-based rather than protein-based catalysis; rejects L-amino acids rather than detecting D-amino acids in the active site. By recycling D-aminoacyl-tRNA to D-amino acids and free tRNA molecules, this enzyme counteracts the toxicity associated with the formation of D-aminoacyl-tRNA entities in vivo and helps enforce protein L-homochirality. The sequence is that of D-aminoacyl-tRNA deacylase from Deinococcus deserti (strain DSM 17065 / CIP 109153 / LMG 22923 / VCD115).